The chain runs to 132 residues: Small ribosomal subunit protein uS11 (132 aa).

This sequence belongs to the universal ribosomal protein uS11 family. As to quaternary structure, part of the 30S ribosomal subunit. Interacts with proteins S7 and S18. Binds to IF-3.

Functionally, located on the platform of the 30S subunit, it bridges several disparate RNA helices of the 16S rRNA. Forms part of the Shine-Dalgarno cleft in the 70S ribosome. In Clostridioides difficile (strain 630) (Peptoclostridium difficile), this protein is Small ribosomal subunit protein uS11.